A 179-amino-acid polypeptide reads, in one-letter code: Large ribosomal subunit protein uL5 (179 aa).

It belongs to the universal ribosomal protein uL5 family. As to quaternary structure, part of the 50S ribosomal subunit; part of the 5S rRNA/L5/L18/L25 subcomplex. Contacts the 5S rRNA and the P site tRNA. Forms a bridge to the 30S subunit in the 70S ribosome.

Its function is as follows. This is one of the proteins that bind and probably mediate the attachment of the 5S RNA into the large ribosomal subunit, where it forms part of the central protuberance. In the 70S ribosome it contacts protein S13 of the 30S subunit (bridge B1b), connecting the 2 subunits; this bridge is implicated in subunit movement. Contacts the P site tRNA; the 5S rRNA and some of its associated proteins might help stabilize positioning of ribosome-bound tRNAs. This chain is Large ribosomal subunit protein uL5, found in Pseudomonas entomophila (strain L48).